The primary structure comprises 638 residues: MDLWQLLLTLAVAGSGNAVSGSEATPAILGRASQSLQRVNPGPGTNPSGKPQFTKCRSPELETFSCHWTEGVHHGVKNPGSIQLFYIRRSTQEWTPEWKECPDYVSAGENSCYFNSSYTSIWIPYCIKLTSNGDTVDQKCFSVEEIVQPDPPIGLNWTLLNISLTGIHADIQVRWEPPPNADVQKGWIVLEYELQYKEVNESQWKMMDPVLSTSVPVYSLRLDKEYEVRVRSRQRNSEKYGEFSEVLYVALPQMSPFACEEDFQFPWFLIIIFGIFGLTMILFLFIFSKQQRIKMLILPPVPVPKIKGIDSDLLKEGKLEEVSTILAIHDNYKPEFYNDDSWVEFIELDIDDPDEKTEGSDTDRLLSNDHEKSLNILGAKDDDSGRTSCYEPDILETDFNASDVCDGTSEVAQPQRLKGEIDLLCLDQKNQSNSPSTDTAPNTQQPGVILAKENKPRPLLISGTESTHQAAHPQLSNPSSLANIDFYAQVSDITPAGSVVLSPGQKNKAGIAPCDMPPEVVSLCQANFIMDNAYFCEADAKKCITVAPHVEAESRGEPSFNQEDIYITTESLTTVAGQPGTAERAPSSEIPVPDYTSIHIVQSPRGLVLNATALPLPDKEFLSSCGYVSTDQLNKIMP.

Positions 1–18 (MDLWQLLLTLAVAGSGNA) are cleaved as a signal peptide. Residues 19–264 (VSGSEATPAI…SPFACEEDFQ (246 aa)) are Extracellular-facing. 2 disulfides stabilise this stretch: Cys56-Cys66 and Cys101-Cys112. Asn115 is a glycosylation site (N-linked (GlcNAc...) asparagine). Residues Cys126 and Cys140 are joined by a disulfide bond. The region spanning 151-254 (PPIGLNWTLL…EVLYVALPQM (104 aa)) is the Fibronectin type-III domain. N-linked (GlcNAc...) asparagine glycosylation is found at Asn156, Asn161, and Asn200. The WSXWS motif motif lies at 240 to 244 (YGEFS). The helical transmembrane segment at 265-288 (FPWFLIIIFGIFGLTMILFLFIFS) threads the bilayer. Residues 289-638 (KQQRIKMLIL…STDQLNKIMP (350 aa)) are Cytoplasmic-facing. The tract at residues 294–379 (KMLILPPVPV…HEKSLNILGA (86 aa)) is required for JAK2 binding. The Box 1 motif signature appears at 297–305 (ILPPVPVPK). The UbE motif motif lies at 340–349 (DSWVEFIELD). A Phosphoserine modification is found at Ser341. A compositionally biased stretch (polar residues) spans 429 to 446 (KNQSNSPSTDTAPNTQQP). Residues 429–448 (KNQSNSPSTDTAPNTQQPGV) form a disordered region. A phosphotyrosine mark is found at Tyr487 and Tyr595.

Belongs to the type I cytokine receptor family. Type 1 subfamily. On growth hormone (GH) binding, forms homodimers and binds JAK2 via a box 1-containing domain. The soluble form (GHBP) is produced by phorbol ester-promoted proteolytic cleavage at the cell surface (shedding) by ADAM17/TACE. Shedding is inhibited by growth hormone (GH) binding to the receptor probably due to a conformational change in GHR rendering the receptor inaccessible to ADAM17. In terms of processing, on GH binding, phosphorylated on tyrosine residues in the cytoplasmic domain by JAK2. Post-translationally, ubiquitinated by the ECS(SOCS2) complex following ligand-binding and phosphorylation by JAK2, leading to its degradation by the proteasome. Regulation by the ECS(SOCS2) complex acts as a negative feedback loop of growth hormone receptor signaling. Ubiquitination is not sufficient for GHR internalization.

The protein localises to the cell membrane. It is found in the secreted. In terms of biological role, receptor for pituitary gland growth hormone (GH1) involved in regulating postnatal body growth. On ligand binding, couples to the JAK2/STAT5 pathway. The soluble form (GHBP) acts as a reservoir of growth hormone in plasma and may be a modulator/inhibitor of GH signaling. The polypeptide is Growth hormone receptor (GHR) (Ailuropoda melanoleuca (Giant panda)).